A 163-amino-acid chain; its full sequence is Large ribosomal subunit protein uL10 (163 aa).

It belongs to the universal ribosomal protein uL10 family. As to quaternary structure, part of the ribosomal stalk of the 50S ribosomal subunit. The N-terminus interacts with L11 and the large rRNA to form the base of the stalk. The C-terminus forms an elongated spine to which L12 dimers bind in a sequential fashion forming a multimeric L10(L12)X complex.

In terms of biological role, forms part of the ribosomal stalk, playing a central role in the interaction of the ribosome with GTP-bound translation factors. The protein is Large ribosomal subunit protein uL10 of Haemophilus influenzae (strain PittGG).